Consider the following 471-residue polypeptide: Cysteine--tRNA ligase (471 aa).

Cys29 lines the Zn(2+) pocket. Positions 31 to 41 match the 'HIGH' region motif; it reads PTVYDYFHIGN. Zn(2+) is bound by residues Cys212, His237, and Glu241. Positions 269–273 match the 'KMSKS' region motif; it reads KMSKS. An ATP-binding site is contributed by Lys272.

Belongs to the class-I aminoacyl-tRNA synthetase family. Monomer. It depends on Zn(2+) as a cofactor.

It is found in the cytoplasm. It carries out the reaction tRNA(Cys) + L-cysteine + ATP = L-cysteinyl-tRNA(Cys) + AMP + diphosphate. The polypeptide is Cysteine--tRNA ligase (Symbiobacterium thermophilum (strain DSM 24528 / JCM 14929 / IAM 14863 / T)).